Consider the following 157-residue polypeptide: S-ribosylhomocysteine lyase (157 aa).

3 residues coordinate Fe cation: histidine 54, histidine 58, and cysteine 126.

This sequence belongs to the LuxS family. As to quaternary structure, homodimer. The cofactor is Fe cation.

The enzyme catalyses S-(5-deoxy-D-ribos-5-yl)-L-homocysteine = (S)-4,5-dihydroxypentane-2,3-dione + L-homocysteine. Functionally, involved in the synthesis of autoinducer 2 (AI-2) which is secreted by bacteria and is used to communicate both the cell density and the metabolic potential of the environment. The regulation of gene expression in response to changes in cell density is called quorum sensing. Catalyzes the transformation of S-ribosylhomocysteine (RHC) to homocysteine (HC) and 4,5-dihydroxy-2,3-pentadione (DPD). This is S-ribosylhomocysteine lyase from Bacillus licheniformis (strain ATCC 14580 / DSM 13 / JCM 2505 / CCUG 7422 / NBRC 12200 / NCIMB 9375 / NCTC 10341 / NRRL NRS-1264 / Gibson 46).